Consider the following 453-residue polypeptide: uncharacterized protein (453 aa).

4 residues coordinate [4Fe-4S] cluster: Cys-74, Cys-80, Cys-83, and Cys-162. Residues Gln-286, Tyr-315, Glu-336, and Asp-384 each coordinate S-adenosyl-L-methionine. The active-site Nucleophile is Cys-411.

The protein belongs to the class I-like SAM-binding methyltransferase superfamily. RNA M5U methyltransferase family.

This is an uncharacterized protein from Staphylococcus aureus (strain MW2).